Here is a 2038-residue protein sequence, read N- to C-terminus: HEAT repeat-containing protein 5A (2038 aa).

2 HEAT repeats span residues 850–887 (EVRR…VADD) and 1082–1119 (LLRR…AAAD). Residues 1646-1668 (RSAEVDDGASEKETLPEFGEGKD) are disordered. Ser1647 bears the Phosphoserine mark.

It belongs to the HEATR5 family.

This is HEAT repeat-containing protein 5A (Heatr5a) from Mus musculus (Mouse).